Reading from the N-terminus, the 69-residue chain is Cytochrome c oxidase subunit 8A, mitochondrial (69 aa).

A mitochondrion-targeting transit peptide spans methionine 1–glutamine 25. Residues serine 2–leucine 19 carry the SIFI-degron motif. Residues valine 26 to glycine 36 lie on the Mitochondrial matrix side of the membrane. Residues valine 37–serine 60 traverse the membrane as a helical segment. Over histidine 61–glutamate 69 the chain is Mitochondrial intermembrane.

This sequence belongs to the cytochrome c oxidase VIII family. Component of the cytochrome c oxidase (complex IV, CIV), a multisubunit enzyme composed of 14 subunits. The complex is composed of a catalytic core of 3 subunits MT-CO1, MT-CO2 and MT-CO3, encoded in the mitochondrial DNA, and 11 supernumerary subunits COX4I, COX5A, COX5B, COX6A, COX6B, COX6C, COX7A, COX7B, COX7C, COX8 and NDUFA4, which are encoded in the nuclear genome. The complex exists as a monomer or a dimer and forms supercomplexes (SCs) in the inner mitochondrial membrane with NADH-ubiquinone oxidoreductase (complex I, CI) and ubiquinol-cytochrome c oxidoreductase (cytochrome b-c1 complex, complex III, CIII), resulting in different assemblies (supercomplex SCI(1)III(2)IV(1) and megacomplex MCI(2)III(2)IV(2)). In response to mitochondrial stress, the precursor protein is ubiquitinated by the SIFI complex in the cytoplasm before mitochondrial import, leading to its degradation. Within the SIFI complex, UBR4 initiates ubiquitin chain that are further elongated or branched by KCMF1.

The protein localises to the mitochondrion inner membrane. It participates in energy metabolism; oxidative phosphorylation. In terms of biological role, component of the cytochrome c oxidase, the last enzyme in the mitochondrial electron transport chain which drives oxidative phosphorylation. The respiratory chain contains 3 multisubunit complexes succinate dehydrogenase (complex II, CII), ubiquinol-cytochrome c oxidoreductase (cytochrome b-c1 complex, complex III, CIII) and cytochrome c oxidase (complex IV, CIV), that cooperate to transfer electrons derived from NADH and succinate to molecular oxygen, creating an electrochemical gradient over the inner membrane that drives transmembrane transport and the ATP synthase. Cytochrome c oxidase is the component of the respiratory chain that catalyzes the reduction of oxygen to water. Electrons originating from reduced cytochrome c in the intermembrane space (IMS) are transferred via the dinuclear copper A center (CU(A)) of subunit 2 and heme A of subunit 1 to the active site in subunit 1, a binuclear center (BNC) formed by heme A3 and copper B (CU(B)). The BNC reduces molecular oxygen to 2 water molecules using 4 electrons from cytochrome c in the IMS and 4 protons from the mitochondrial matrix. The chain is Cytochrome c oxidase subunit 8A, mitochondrial (Cox8a) from Mus musculus (Mouse).